Here is a 759-residue protein sequence, read N- to C-terminus: GTPase-activating protein rrc-1 (759 aa).

The SH3 domain maps to 164-243; that stretch reads PAIAAAVVTK…PRDCVMLIDD (80 aa). A Rho-GAP domain is found at 280–473; sequence LELTDLYMRT…FFIENSESLF (194 aa). The tract at residues 591 to 624 is disordered; sequence ARSMRPTSRPPPSPRTRRARFSNGSSNNVQKLNE. Residues 612–622 show a composition bias toward polar residues; that stretch reads SNGSSNNVQKL.

As to expression, expressed in coelomocytes, excretory cells, uterine-seam cells and GLR cells.

Its function is as follows. Functions as a GTPase-activating protein (GAP) for ced-10/rac-1 and CDC42. In Caenorhabditis elegans, this protein is GTPase-activating protein rrc-1 (rrc-1).